The chain runs to 216 residues: Somatotropin (216 aa).

Positions 1–26 (MAAGPRNSVLLAFALLCLPWPQEVGT) are cleaved as a signal peptide. Histidine 45 is a binding site for Zn(2+). Residues cysteine 78 and cysteine 189 are joined by a disulfide bond. Serine 131 carries the phosphoserine modification. Residue glutamate 198 coordinates Zn(2+). The cysteines at positions 206 and 214 are disulfide-linked.

Belongs to the somatotropin/prolactin family.

The protein localises to the secreted. In terms of biological role, plays an important role in growth control. Its major role in stimulating body growth is to stimulate the liver and other tissues to secrete IGF1. It stimulates both the differentiation and proliferation of myoblasts. It also stimulates amino acid uptake and protein synthesis in muscle and other tissues. The sequence is that of Somatotropin (GH1) from Felis catus (Cat).